Consider the following 358-residue polypeptide: MKVGVALSGGVDSAVALYLLLKEGHEVKAFHMKTKEDEFFLKKEIKKKVCCSPSDTADAIRIARSLGVEIEIVDVREVFREKVIEPFKRDLLRGLTPNPCVHCNRYVKFGYFMDYVLSQGFDAFASGHYARVEFSGKYGKKVIKKGVDGKKDQSYFLARIEPWRIEKLLFPNGIYTKEEIRRIAEEAGIHVAKKQESQDVCFIPDGSIENFLKDEGITLSEGKVITEKGEVVGHHRGYPLYTVGQRKGLKIEKFGERLYVREKIPESNVVVVSGLEGVFFSGLIAVDPVWHVDLPEEFRCVCRVRKKAEEAPAIVRVKNSEVEVRFEKKIFAVTPGQIAAFYDEDTLLGGAIIKEGIP.

ATP contacts are provided by residues 6–13 (ALSGGVDS) and methionine 32. Cysteine 103 acts as the Nucleophile in catalysis. An intrachain disulfide couples cysteine 103 to cysteine 201. An ATP-binding site is contributed by glycine 127. Residues 151–153 (KDQ) form an interaction with tRNA region. Cysteine 201 acts as the Cysteine persulfide intermediate in catalysis.

This sequence belongs to the MnmA/TRMU family.

It is found in the cytoplasm. It catalyses the reaction S-sulfanyl-L-cysteinyl-[protein] + uridine(34) in tRNA + AH2 + ATP = 2-thiouridine(34) in tRNA + L-cysteinyl-[protein] + A + AMP + diphosphate + H(+). In terms of biological role, catalyzes the 2-thiolation of uridine at the wobble position (U34) of tRNA, leading to the formation of s(2)U34. This Thermotoga neapolitana (strain ATCC 49049 / DSM 4359 / NBRC 107923 / NS-E) protein is tRNA-specific 2-thiouridylase MnmA.